The following is a 134-amino-acid chain: Profilin-3 (134 aa).

Cysteine 13 and cysteine 118 are oxidised to a cystine. Residues 84-100 (AVIRGKKGSGGITIKKT) carry the Involved in PIP2 interaction motif. The residue at position 114 (threonine 114) is a Phosphothreonine.

Belongs to the profilin family. Occurs in many kinds of cells as a complex with monomeric actin in a 1:1 ratio. In terms of processing, phosphorylated by MAP kinases.

The protein localises to the cytoplasm. Its subcellular location is the cytoskeleton. In terms of biological role, binds to actin and affects the structure of the cytoskeleton. At high concentrations, profilin prevents the polymerization of actin, whereas it enhances it at low concentrations. The protein is Profilin-3 of Olea europaea (Common olive).